The following is a 352-amino-acid chain: Molybdenum import ATP-binding protein ModC (352 aa).

The ABC transporter domain maps to 1–229; it reads MLELNFSQTL…SVMNPWLPKE (229 aa). 31-38 contacts ATP; it reads GVSGAGKT. The Mop domain occupies 289-352; that stretch reads QTSIRNVLRA…AQIKSVSITA (64 aa).

The protein belongs to the ABC transporter superfamily. Molybdate importer (TC 3.A.1.8) family. In terms of assembly, the complex is composed of two ATP-binding proteins (ModC), two transmembrane proteins (ModB) and a solute-binding protein (ModA).

Its subcellular location is the cell inner membrane. It catalyses the reaction molybdate(out) + ATP + H2O = molybdate(in) + ADP + phosphate + H(+). In terms of biological role, part of the ABC transporter complex ModABC involved in molybdenum import. Responsible for energy coupling to the transport system. The chain is Molybdenum import ATP-binding protein ModC from Escherichia coli (strain K12).